A 150-amino-acid polypeptide reads, in one-letter code: Ribosomal RNA large subunit methyltransferase H (150 aa).

Residues Ala100 and 118-123 each bind S-adenosyl-L-methionine; that span reads LSEMTF.

It belongs to the RNA methyltransferase RlmH family. In terms of assembly, homodimer.

It is found in the cytoplasm. The enzyme catalyses pseudouridine(1915) in 23S rRNA + S-adenosyl-L-methionine = N(3)-methylpseudouridine(1915) in 23S rRNA + S-adenosyl-L-homocysteine + H(+). Its function is as follows. Specifically methylates the pseudouridine at position 1915 (m3Psi1915) in 23S rRNA. In Helicobacter pylori (strain Shi470), this protein is Ribosomal RNA large subunit methyltransferase H.